Here is a 338-residue protein sequence, read N- to C-terminus: Probable protein S-acyltransferase 1 (338 aa).

2 consecutive transmembrane segments (helical) span residues 32-52 and 68-88; these read DASS…AFSI and LTLI…FLTS. In terms of domain architecture, DHHC spans 142–192; the sequence is KFCDTCQLYRPPRAFHCSICNNCVQRFDHHCPWVGQCIALRNYPFFVCFLS. Cys-172 serves as the catalytic S-palmitoyl cysteine intermediate. Helical transmembrane passes span 186 to 206 and 225 to 245; these read FFVC…VFSW and ILGV…GLTV. Residues 319–338 form a disordered region; that stretch reads FGPKDTKMSSGKSDSEARER. Residues 320–338 show a composition bias toward basic and acidic residues; it reads GPKDTKMSSGKSDSEARER.

The protein belongs to the DHHC palmitoyltransferase family.

The protein resides in the endosome membrane. The enzyme catalyses L-cysteinyl-[protein] + hexadecanoyl-CoA = S-hexadecanoyl-L-cysteinyl-[protein] + CoA. Functionally, palmitoyl acyltransferase. In Arabidopsis thaliana (Mouse-ear cress), this protein is Probable protein S-acyltransferase 1 (PAT01).